The primary structure comprises 784 residues: E3 UFM1-protein ligase 1 homolog (784 aa).

The tract at residues 401 to 481 (QKGNSSAQDL…GGGGGGNKKT (81 aa)) is disordered.

This sequence belongs to the UFL1 family.

Functionally, E3 UFM1-protein ligase that mediates ufmylation of target proteins. This is E3 UFM1-protein ligase 1 homolog from Drosophila ananassae (Fruit fly).